Reading from the N-terminus, the 156-residue chain is ATP synthase subunit b (156 aa).

Residues 11-31 (LIAFALFVWFCMKFVWPPIIN) traverse the membrane as a helical segment.

The protein belongs to the ATPase B chain family. In terms of assembly, F-type ATPases have 2 components, F(1) - the catalytic core - and F(0) - the membrane proton channel. F(1) has five subunits: alpha(3), beta(3), gamma(1), delta(1), epsilon(1). F(0) has three main subunits: a(1), b(2) and c(10-14). The alpha and beta chains form an alternating ring which encloses part of the gamma chain. F(1) is attached to F(0) by a central stalk formed by the gamma and epsilon chains, while a peripheral stalk is formed by the delta and b chains.

Its subcellular location is the cell inner membrane. Its function is as follows. F(1)F(0) ATP synthase produces ATP from ADP in the presence of a proton or sodium gradient. F-type ATPases consist of two structural domains, F(1) containing the extramembraneous catalytic core and F(0) containing the membrane proton channel, linked together by a central stalk and a peripheral stalk. During catalysis, ATP synthesis in the catalytic domain of F(1) is coupled via a rotary mechanism of the central stalk subunits to proton translocation. In terms of biological role, component of the F(0) channel, it forms part of the peripheral stalk, linking F(1) to F(0). The sequence is that of ATP synthase subunit b from Haemophilus influenzae (strain 86-028NP).